We begin with the raw amino-acid sequence, 293 residues long: Acetylglutamate kinase (293 aa).

Residues 66–67 (GG), Arg-88, and Asn-190 each bind substrate.

It belongs to the acetylglutamate kinase family. ArgB subfamily.

It is found in the cytoplasm. The enzyme catalyses N-acetyl-L-glutamate + ATP = N-acetyl-L-glutamyl 5-phosphate + ADP. Its pathway is amino-acid biosynthesis; L-arginine biosynthesis; N(2)-acetyl-L-ornithine from L-glutamate: step 2/4. Functionally, catalyzes the ATP-dependent phosphorylation of N-acetyl-L-glutamate. This is Acetylglutamate kinase from Thiobacillus denitrificans (strain ATCC 25259 / T1).